The following is a 104-amino-acid chain: Growth-regulated protein homolog alpha (104 aa).

An N-terminal signal peptide occupies residues 1-30; that stretch reads MAPAATAAAPRLLRAAMLFLLLVAAGRRAA. Intrachain disulfides connect C40–C66 and C42–C82.

This sequence belongs to the intercrine alpha (chemokine CxC) family.

It is found in the secreted. This chain is Growth-regulated protein homolog alpha, found in Bos taurus (Bovine).